A 436-amino-acid chain; its full sequence is Trigger factor (436 aa).

The region spanning 161–246 (DDQLNIDFVG…VNSVSEPKLP (86 aa)) is the PPIase FKBP-type domain.

The protein belongs to the FKBP-type PPIase family. Tig subfamily.

It is found in the cytoplasm. The enzyme catalyses [protein]-peptidylproline (omega=180) = [protein]-peptidylproline (omega=0). Involved in protein export. Acts as a chaperone by maintaining the newly synthesized protein in an open conformation. Functions as a peptidyl-prolyl cis-trans isomerase. This Pseudomonas fluorescens (strain ATCC BAA-477 / NRRL B-23932 / Pf-5) protein is Trigger factor.